The primary structure comprises 200 residues: Imidazoleglycerol-phosphate dehydratase (200 aa).

It belongs to the imidazoleglycerol-phosphate dehydratase family.

The protein resides in the cytoplasm. The catalysed reaction is D-erythro-1-(imidazol-4-yl)glycerol 3-phosphate = 3-(imidazol-4-yl)-2-oxopropyl phosphate + H2O. The protein operates within amino-acid biosynthesis; L-histidine biosynthesis; L-histidine from 5-phospho-alpha-D-ribose 1-diphosphate: step 6/9. The polypeptide is Imidazoleglycerol-phosphate dehydratase (Chlorobium phaeobacteroides (strain BS1)).